Consider the following 423-residue polypeptide: 58 kDa phosphoprotein (423 aa).

Residues 46–60 (KMGYEKMKSEDSTEE) show a composition bias toward basic and acidic residues. The tract at residues 46-82 (KMGYEKMKSEDSTEEKSDEEEEDEEEEEEEEEDDDPE) is disordered. Residues 61–82 (KSDEEEEDEEEEEEEEEDDDPE) show a composition bias toward acidic residues. TPR repeat units follow at residues 113–146 (ICKL…GNPS), 147–180 (AMIY…NVDS), and 181–214 (ANAY…DYDE). The segment at 260–301 (KKKAEKMYKENNKRENYDSDSSDSSYSEPDFSGDFPGGMPGG) is disordered. Residues 264–276 (EKMYKENNKRENY) are compositionally biased toward basic and acidic residues. The tract at residues 292-362 (GDFPGGMPGG…GMPGMPGGMP (71 aa)) is 19 X 3-4 AA approximate repeats. One can recognise an STI1 domain in the interval 361–423 (MPDLNSPEMK…GGMMGEKPKP (63 aa)).

The protein localises to the cytoplasm. In terms of biological role, may play a role in protein folding or protein-protein interactions. May act as a co-chaperone. This chain is 58 kDa phosphoprotein, found in Plasmodium berghei.